A 372-amino-acid chain; its full sequence is MPLPDFHVSEPFTLGIELEMQVVNPPGYDLSQDSSMLIDAVKNKITAGEVKHDITESMLELATDVCRDINQAAGQFSAMQKVVLQAAADHHLEICGGGTHPFQKWQRQEVCDNERYQRTLENFGYLIQQATVFGQHVHVGCASGDDAIYLLHGLSRFVPHFIALSAASPYMQGTDTRFASSRPNIFSAFPDNGPMPWVSNWQQFEALFRCLSYTTMIDSIKDLHWDIRPSPHFGTVEVRVMDTPLTLSHAVNMAGLIQATAHWLLTERPFKHKEKDYLLYKFNRFQACRYGLEGVITDPYTGDRRPLTEDTLRLLEKIAPSAHKIGASSAIEALHRQVVSGLNEAQLMRDFVADGGSLIGLVKKHCEIWAGD.

It belongs to the glutamate--cysteine ligase type 2 family. YbdK subfamily. As to quaternary structure, homodimer.

The catalysed reaction is L-cysteine + L-glutamate + ATP = gamma-L-glutamyl-L-cysteine + ADP + phosphate + H(+). ATP-dependent carboxylate-amine ligase which exhibits weak glutamate--cysteine ligase activity. In Escherichia coli O157:H7, this protein is Putative glutamate--cysteine ligase 2 (ybdK).